The following is a 355-amino-acid chain: MSSSKMNGRSIRINRVPATIFAILLTIVLVYFLNFHQEERPAIYGKLRSDNPNRVNLRKMLIAAIQASQRGGLEVLDVARSRQLKVRSKGQTDEGVNDPFTDADGRSHCVMKQGLQRIFPRVRIFSEEDKEHCKESHSYDLDPTVLHETAQVPDVSVNAQDVTVWVDPLDATKEFTEELYEYVTTMVCVAVAGRPVIGVIHSPFNGQTAWAWVGNSMSEYLAGLHPPHGQENELPIITVSRSHTAGAKDLARGIFGEQVNLLTAAGAGYKVLQVVANNATAYLHTSKIKKWDICAGDAILHALGGTMTTLNDQLIRYGPDESPVNTEGLLATLEKHDKYMDQLVKYRTAHNGQLA.

A helical transmembrane segment spans residues 16-36; sequence VPATIFAILLTIVLVYFLNFH. Mg(2+)-binding residues include Glu-127, Asp-167, Leu-169, Asp-170, and Asp-292. Glu-127 is a substrate binding site. Substrate is bound by residues 169-172 and Asp-292; that span reads LDAT.

Belongs to the inositol monophosphatase superfamily. Mg(2+) is required as a cofactor.

The protein localises to the membrane. The catalysed reaction is a myo-inositol phosphate + H2O = myo-inositol + phosphate. It functions in the pathway polyol metabolism; myo-inositol biosynthesis; myo-inositol from D-glucose 6-phosphate: step 2/2. In Drosophila pseudoobscura pseudoobscura (Fruit fly), this protein is Putative inositol monophosphatase 3.